We begin with the raw amino-acid sequence, 242 residues long: MTFRFSARCRLIKRFLLRLLLACAVLWGGGVALFSIVPVPFSAVMLERQLGAWLSGNFHYIAHSDWVGMDEISPWMGLAVIAAEDQKFPEHWGFDVPAIEKALAHNERNENRIRGASTLSQQTAKNLFLWDGRSWLRKGLEAGLTVGIETVWSKKRILTVYLNIAEFGEGTFGVEAASQRYFHKPASRLTAAEAALLAAVLPNPIRFRADAPSGYIRSRQAWILRQMRQLGGEGFMRANQLH.

The helical transmembrane segment at 19 to 39 (LLLACAVLWGGGVALFSIVPV) threads the bilayer.

The protein belongs to the glycosyltransferase 51 family.

It localises to the cell inner membrane. The catalysed reaction is [GlcNAc-(1-&gt;4)-Mur2Ac(oyl-L-Ala-gamma-D-Glu-L-Lys-D-Ala-D-Ala)](n)-di-trans,octa-cis-undecaprenyl diphosphate + beta-D-GlcNAc-(1-&gt;4)-Mur2Ac(oyl-L-Ala-gamma-D-Glu-L-Lys-D-Ala-D-Ala)-di-trans,octa-cis-undecaprenyl diphosphate = [GlcNAc-(1-&gt;4)-Mur2Ac(oyl-L-Ala-gamma-D-Glu-L-Lys-D-Ala-D-Ala)](n+1)-di-trans,octa-cis-undecaprenyl diphosphate + di-trans,octa-cis-undecaprenyl diphosphate + H(+). The protein operates within cell wall biogenesis; peptidoglycan biosynthesis. Its function is as follows. Peptidoglycan polymerase that catalyzes glycan chain elongation from lipid-linked precursors. The protein is Biosynthetic peptidoglycan transglycosylase of Klebsiella oxytoca.